The primary structure comprises 111 residues: MIWLTLVFASLLSVAGQLCQKQATCFVAINKRRKHIVLWLGLALACIGLAMMLWLLVLQNVPVGIAYPMLSLNFVWVTLAAVKLWHEPVSPRHWCGVAFIIGGIVILGSTV.

3 helical membrane-spanning segments follow: residues 36–56 (IVLWLGLALACIGLAMMLWLL), 61–81 (VPVGIAYPMLSLNFVWVTLAA), and 88–108 (PVSPRHWCGVAFIIGGIVILG). Residues 40–109 (LGLALACIGL…IIGGIVILGS (70 aa)) form the EamA domain.

Belongs to the ArnE family. As to quaternary structure, heterodimer of ArnE and ArnF.

The protein localises to the cell inner membrane. It participates in bacterial outer membrane biogenesis; lipopolysaccharide biosynthesis. Its function is as follows. Translocates 4-amino-4-deoxy-L-arabinose-phosphoundecaprenol (alpha-L-Ara4N-phosphoundecaprenol) from the cytoplasmic to the periplasmic side of the inner membrane. The protein is Probable 4-amino-4-deoxy-L-arabinose-phosphoundecaprenol flippase subunit ArnE of Shigella flexneri serotype 5b (strain 8401).